A 101-amino-acid chain; its full sequence is Small ribosomal subunit protein uS14 (101 aa).

Belongs to the universal ribosomal protein uS14 family. Part of the 30S ribosomal subunit. Contacts proteins S3 and S10.

Its function is as follows. Binds 16S rRNA, required for the assembly of 30S particles and may also be responsible for determining the conformation of the 16S rRNA at the A site. This chain is Small ribosomal subunit protein uS14, found in Chlamydia muridarum (strain MoPn / Nigg).